Here is a 231-residue protein sequence, read N- to C-terminus: Flagellar L-ring protein (231 aa).

The first 18 residues, 1–18 (MSRLLIVVSLSSAFALAG), serve as a signal peptide directing secretion. Cys-19 carries N-palmitoyl cysteine lipidation. The S-diacylglycerol cysteine moiety is linked to residue Cys-19.

Belongs to the FlgH family. In terms of assembly, the basal body constitutes a major portion of the flagellar organelle and consists of four rings (L,P,S, and M) mounted on a central rod.

It is found in the cell outer membrane. The protein resides in the bacterial flagellum basal body. Its function is as follows. Assembles around the rod to form the L-ring and probably protects the motor/basal body from shearing forces during rotation. The chain is Flagellar L-ring protein from Stutzerimonas stutzeri (strain A1501) (Pseudomonas stutzeri).